The following is a 1403-amino-acid chain: Protein FAM135B (1403 aa).

Disordered regions lie at residues 445–483 (EKNL…EVQE), 514–548 (EDEC…GQTP), 648–669 (REAL…DLSA), and 718–740 (RHAH…LPSG). The segment covering 649 to 661 (EALDTKPSQPDHA) has biased composition (basic and acidic residues). The span at 731-740 (TESNTSLPSG) shows a compositional bias: polar residues. Phosphoserine is present on residues Ser775 and Ser776. The interval 790 to 819 (TAGFSEDLDPSSKENSPPRHTSLSYGGSRV) is disordered. Residues 802–814 (KENSPPRHTSLSY) show a composition bias toward polar residues.

It belongs to the FAM135 family.

This is Protein FAM135B (Fam135b) from Mus musculus (Mouse).